Reading from the N-terminus, the 189-residue chain is Interferon alpha-6 (189 aa).

An N-terminal signal peptide occupies residues 1–20 (MALPFALLMALVVLSCKSSC). 2 disulfide bridges follow: cysteine 24–cysteine 122 and cysteine 52–cysteine 162.

The protein belongs to the alpha/beta interferon family.

It is found in the secreted. In terms of biological role, produced by macrophages, IFN-alpha have antiviral activities. Interferon stimulates the production of two enzymes: a protein kinase and an oligoadenylate synthetase. This chain is Interferon alpha-6 (IFNA6), found in Homo sapiens (Human).